The sequence spans 174 residues: RNA pyrophosphohydrolase (174 aa).

A Nudix hydrolase domain is found at G6 to K149. The short motif at G38 to G59 is the Nudix box element.

Belongs to the Nudix hydrolase family. RppH subfamily. A divalent metal cation is required as a cofactor.

Accelerates the degradation of transcripts by removing pyrophosphate from the 5'-end of triphosphorylated RNA, leading to a more labile monophosphorylated state that can stimulate subsequent ribonuclease cleavage. This is RNA pyrophosphohydrolase from Neisseria meningitidis serogroup B (strain ATCC BAA-335 / MC58).